Consider the following 503-residue polypeptide: Maturase K (503 aa).

The protein belongs to the intron maturase 2 family. MatK subfamily.

Its subcellular location is the plastid. The protein localises to the chloroplast. Its function is as follows. Usually encoded in the trnK tRNA gene intron. Probably assists in splicing its own and other chloroplast group II introns. This chain is Maturase K, found in Panax ginseng (Korean ginseng).